Reading from the N-terminus, the 901-residue chain is MLIPSKLSRPVRLDHTVVRERLLAKLSGANNFRLALITSPAGYGKTTLISQWAAGKNDIGWYSLDEGDNQQERFASYLIAAVQQATNGHCAICETMAQKRQYASLTSLFAQLFIELAEWHSPLYLVIDDYHLITNPVIHESMRFFIRHQPENLTLVVLSRNLPQLGIANLRVRDQLLEIGSQQLAFTHQEAKQFFDCRLSSPIEAAESSRICDDVSGWATALQLIALSARQNTHSAHKSARRLAGINASHLSDYLVDEVLDNVDLATRHFLLKSAILRSMNDALITRVTGEENGQMRLEEIERQGLFLQRMDDTGEWFCYHPLFGNFLRQRCQWELAAELPEIHRAAAESWMAQGFPSEAIHHALAAGDALMLRDILLNHAWSLFNHSELSLLEESLKALPWDSLLENPQLVLLQAWLMQSQHRYGEVNTLLARAEHEIKDIREGTMHAEFNALRAQVAINDGNPDEAERLAKLALEELPPGWFYSRIVATSVLGEVLHCKGELTRSLALMQQTEQMARQHDVWHYALWSLIQQSEILFAQGFLQTAWETQEKAFQLINEQHLEQLPMHEFLVRIRAQLLWAWARLDEAEASARSGIEVLSSYQPQQQLQCLAMLIQCSLARGDLDNARSQLNRLENLLGNGKYHSDWISNANKVRVIYWQMTGDKAAAANWLRHTAKPEFANNHFLQGQWRNIARAQILLGEFEPAEIVLEELNENARSLRLMSDLNRNLLLLNQLYWQAGRKSDAQRVLLDALKLANRTGFISHFVIEGEAMAQQLRQLIQLNTLPELEQHRAQRILREINQHHRHKFAHFDENFVERLLNHPEVPELIRTSPLTQREWQVLGLIYSGYSNEQIAGELEVAATTIKTHIRNLYQKLGVAHRQAAVQHAQKLLKMMGYGV.

39–46 (SPAGYGKT) contributes to the ATP binding site. Residues 829 to 894 (ELIRTSPLTQ…AAVQHAQKLL (66 aa)) enclose the HTH luxR-type domain. The H-T-H motif DNA-binding region spans 853–872 (NEQIAGELEVAATTIKTHIR).

It belongs to the MalT family. Monomer in solution. Oligomerizes to an active state in the presence of the positive effectors ATP and maltotriose.

With respect to regulation, activated by ATP and maltotriose, which are both required for DNA binding. Functionally, positively regulates the transcription of the maltose regulon whose gene products are responsible for uptake and catabolism of malto-oligosaccharides. Specifically binds to the promoter region of its target genes, recognizing a short DNA motif called the MalT box. The chain is HTH-type transcriptional regulator MalT from Escherichia coli (strain 55989 / EAEC).